Here is a 125-residue protein sequence, read N- to C-terminus: Neuropeptide B (125 aa).

The N-terminal stretch at 1 to 24 (MARSATLAAAALALCLLLAPPGLA) is a signal peptide. The interval 54–73 (RRSQPYRGAEPPGGAGASPE) is disordered. Residues 56 to 125 (SQPYRGAEPP…SLRAADCLAA (70 aa)) constitute a propeptide that is removed on maturation.

This sequence belongs to the neuropeptide B/W family. Widely expressed in the central nervous system. High levels are found in substantia nigra, hypothalamus, hippocampus, spinal cord, placenta and fetal brain; lower levels are found in testis, uterus and ovary. Also detected at high levels in colorectal adenocarcinoma.

The protein resides in the secreted. In terms of biological role, may be involved in the regulation of feeding, neuroendocrine system, memory, learning and in the afferent pain pathway. This Homo sapiens (Human) protein is Neuropeptide B (NPB).